The sequence spans 333 residues: Glycerol-3-phosphate dehydrogenase [NAD(P)+] (333 aa).

Positions 10, 11, 31, and 105 each coordinate NADPH. Residues Lys105, Gly136, and Ser138 each contribute to the sn-glycerol 3-phosphate site. Residue Ala140 coordinates NADPH. The sn-glycerol 3-phosphate site is built by Lys191, Asp244, Ser254, Arg255, and Asn256. Lys191 serves as the catalytic Proton acceptor. Arg255 lines the NADPH pocket. 2 residues coordinate NADPH: Val279 and Glu281.

It belongs to the NAD-dependent glycerol-3-phosphate dehydrogenase family.

It localises to the cytoplasm. It catalyses the reaction sn-glycerol 3-phosphate + NAD(+) = dihydroxyacetone phosphate + NADH + H(+). It carries out the reaction sn-glycerol 3-phosphate + NADP(+) = dihydroxyacetone phosphate + NADPH + H(+). Its pathway is membrane lipid metabolism; glycerophospholipid metabolism. Its function is as follows. Catalyzes the reduction of the glycolytic intermediate dihydroxyacetone phosphate (DHAP) to sn-glycerol 3-phosphate (G3P), the key precursor for phospholipid synthesis. The chain is Glycerol-3-phosphate dehydrogenase [NAD(P)+] from Leptospira biflexa serovar Patoc (strain Patoc 1 / Ames).